We begin with the raw amino-acid sequence, 154 residues long: Myoglobin (154 aa).

A Globin domain is found at 2-148 (GLSDGEWQLV…FRNDMAAKYK (147 aa)). Residue Ser-4 is modified to Phosphoserine. Residue His-65 coordinates nitrite. O2 is bound at residue His-65. Residue Thr-68 is modified to Phosphothreonine. Position 94 (His-94) interacts with heme b.

It belongs to the globin family. In terms of assembly, monomeric.

It localises to the cytoplasm. It is found in the sarcoplasm. The enzyme catalyses Fe(III)-heme b-[protein] + nitric oxide + H2O = Fe(II)-heme b-[protein] + nitrite + 2 H(+). It catalyses the reaction H2O2 + AH2 = A + 2 H2O. In terms of biological role, monomeric heme protein which primary function is to store oxygen and facilitate its diffusion within muscle tissues. Reversibly binds oxygen through a pentacoordinated heme iron and enables its timely and efficient release as needed during periods of heightened demand. Depending on the oxidative conditions of tissues and cells, and in addition to its ability to bind oxygen, it also has a nitrite reductase activity whereby it regulates the production of bioactive nitric oxide. Under stress conditions, like hypoxia and anoxia, it also protects cells against reactive oxygen species thanks to its pseudoperoxidase activity. The protein is Myoglobin (MB) of Macaca fascicularis (Crab-eating macaque).